The following is a 493-amino-acid chain: Glutamyl-tRNA(Gln) amidotransferase subunit A (493 aa).

Catalysis depends on charge relay system residues K79 and S159. The Acyl-ester intermediate role is filled by S183.

This sequence belongs to the amidase family. GatA subfamily. Heterotrimer of A, B and C subunits.

It catalyses the reaction L-glutamyl-tRNA(Gln) + L-glutamine + ATP + H2O = L-glutaminyl-tRNA(Gln) + L-glutamate + ADP + phosphate + H(+). In terms of biological role, allows the formation of correctly charged Gln-tRNA(Gln) through the transamidation of misacylated Glu-tRNA(Gln) in organisms which lack glutaminyl-tRNA synthetase. The reaction takes place in the presence of glutamine and ATP through an activated gamma-phospho-Glu-tRNA(Gln). The sequence is that of Glutamyl-tRNA(Gln) amidotransferase subunit A from Allorhizobium ampelinum (strain ATCC BAA-846 / DSM 112012 / S4) (Agrobacterium vitis (strain S4)).